An 86-amino-acid polypeptide reads, in one-letter code: Beta-toxin Tz1 (86 aa).

The N-terminal stretch at 1 to 20 (MTRFVLFICCFFLIGMVVEC) is a signal peptide. Residues 21-83 (KDGYLVGNDG…TWDRATNRCG (63 aa)) form the LCN-type CS-alpha/beta domain. 4 disulfides stabilise this stretch: C31/C82, C35/C57, C43/C63, and C47/C65. At R84 the chain carries Arginine amide.

This sequence belongs to the long (4 C-C) scorpion toxin superfamily. Sodium channel inhibitor family. Beta subfamily. In terms of tissue distribution, expressed by the venom gland.

Its subcellular location is the secreted. Functionally, beta toxins bind voltage-independently at site-4 of sodium channels (Nav) and shift the voltage of activation toward more negative potentials thereby affecting sodium channel activation and promoting spontaneous and repetitive firing. Strongly affects skeletal muscle channels Nav1.4/SCN4A, poorly affects the neuronal channels Nav1.6/SCN8A and Nav1.2/SCN2A. Induces spastic paralysis of rear limbs, increased salivation, apnea, tachycardia and increased perspiration. In Tityus zulianus (Venezuelan scorpion), this protein is Beta-toxin Tz1.